Consider the following 246-residue polypeptide: Chaperone protein SefB (246 aa).

The signal sequence occupies residues 1–24 (MYILNKFIRRTVIFFFFCYLPIAS). A disulfide bond links Cys124 and Cys155.

The protein belongs to the periplasmic pilus chaperone family.

Its subcellular location is the periplasm. Its function is as follows. Required for the biogenesis of the SefA (SEF14) fimbria. This chain is Chaperone protein SefB (sefB), found in Salmonella enteritidis.